We begin with the raw amino-acid sequence, 53 residues long: Cytochrome c-552 (53 aa).

Cysteine 19, cysteine 22, histidine 23, and methionine 44 together coordinate heme c.

Binds 1 heme c group covalently per subunit.

It is found in the cell membrane. The chain is Cytochrome c-552 from Schinkia azotoformans (Bacillus azotoformans).